Reading from the N-terminus, the 312-residue chain is Coiled-coil domain-containing protein 160 homolog (312 aa).

Positions 126–281 form a coiled coil; sequence SEGAKFKNQL…EERKREKTHS (156 aa).

Belongs to the CCDC160 family.

The sequence is that of Coiled-coil domain-containing protein 160 homolog from Xenopus tropicalis (Western clawed frog).